A 130-amino-acid chain; its full sequence is Transcription antitermination protein NusB (130 aa).

The protein belongs to the NusB family.

In terms of biological role, involved in transcription antitermination. Required for transcription of ribosomal RNA (rRNA) genes. Binds specifically to the boxA antiterminator sequence of the ribosomal RNA (rrn) operons. The polypeptide is Transcription antitermination protein NusB (Bacillus cereus (strain ATCC 10987 / NRS 248)).